Consider the following 453-residue polypeptide: Homogentisate 1,2-dioxygenase (453 aa).

The Proton acceptor role is filled by His-306. 2 residues coordinate Fe cation: His-349 and Glu-355. Tyr-364 and His-385 together coordinate homogentisate. His-385 provides a ligand contact to Fe cation.

It belongs to the homogentisate dioxygenase family. In terms of assembly, hexamer; dimer of trimers. It depends on Fe cation as a cofactor.

It catalyses the reaction homogentisate + O2 = 4-maleylacetoacetate + H(+). The protein operates within amino-acid degradation; L-phenylalanine degradation; acetoacetate and fumarate from L-phenylalanine: step 4/6. Involved in the catabolism of homogentisate (2,5-dihydroxyphenylacetate or 2,5-OH-PhAc), a central intermediate in the degradation of phenylalanine and tyrosine. Catalyzes the oxidative ring cleavage of the aromatic ring of homogentisate to yield maleylacetoacetate. The sequence is that of Homogentisate 1,2-dioxygenase from Rhizobium leguminosarum bv. trifolii (strain WSM2304).